Here is a 232-residue protein sequence, read N- to C-terminus: Phospholipase A2 hemilipin (232 aa).

The N-terminal stretch at 1-18 (MTFLILTILATVTPSLYS) is a signal peptide. Residues 19–105 (HVVQRELRVN…QRCSGSAEGR (87 aa)) constitute a propeptide that is removed on maturation. Ca(2+) is bound by residues W115, G117, and G119. Disulfide bonds link C116–C137, C136–C175, C143–C168, C166–C206, and C211–C219. N124 carries an N-linked (GlcNAc...) asparagine glycan. H140 is an active-site residue. D141 is a Ca(2+) binding site. An N-linked (GlcNAc...) asparagine glycan is attached at N157. The propeptide occupies 214–217 (KRDA).

Belongs to the phospholipase A2 family. Group III subfamily. Heterodimer composed of a small subunit and a large subunit; disulfid-linked. Requires Ca(2+) as cofactor. In terms of tissue distribution, expressed by the venom gland.

It localises to the secreted. The catalysed reaction is a 1,2-diacyl-sn-glycero-3-phosphocholine + H2O = a 1-acyl-sn-glycero-3-phosphocholine + a fatty acid + H(+). Scorpion venom phospholipase A2 (PLA2) that shows high hydrolytic activities towards lecithin and acts as an effective blocker of all angiogenesis key steps in vivo and in vitro. It has no effect on apoptosis and does not display hemolytic, inflammatory or neurotoxic effects. PLA2 catalyzes the calcium-dependent hydrolysis of the 2-acyl groups in 3-sn-phosphoglycerides. This chain is Phospholipase A2 hemilipin, found in Hemiscorpius lepturus (Scorpion).